The chain runs to 113 residues: Insulin-like peptide 02 (113 aa).

The first 22 residues, 1 to 22 (MFYLTFLLFGAICIGQIQLGQP), serve as a signal peptide directing secretion. A propeptide spanning residues 23 to 42 (VKFKVNEDGHRPSVYPIKYR) is cleaved from the precursor. Cystine bridges form between Cys-44–Cys-99, Cys-56–Cys-112, and Cys-98–Cys-103. The propeptide at 62–87 (RRKRSIEADIITDKDTANSYFNRVKR) is c peptide.

Belongs to the insulin family.

The protein resides in the secreted. In terms of biological role, insulin decreases blood glucose concentration. May have evolved to activate insulin receptors (INSR) in vertebrates. Molecular docking studies reveals unique interaction with the human insulin receptor. In vivo, insulin-like peptide injection reduces blood glucose levels in two models of zebrafish diabetes (streptozotocin- and glucose-induced). Also shorter swimming distance of zebrafish larvae, an effect which is not observed with human insulin. This chain is Insulin-like peptide 02, found in Exaiptasia diaphana (Tropical sea anemone).